The sequence spans 208 residues: Golgi apparatus membrane protein TVP23 homolog B (208 aa).

At methionine 1 the chain carries N-acetylmethionine. Residues 1-21 (MLQQDSNDDTEDVSLFDAEEE) are compositionally biased toward acidic residues. Positions 1 to 27 (MLQQDSNDDTEDVSLFDAEEETTNRPK) are disordered. Helical transmembrane passes span 34 to 53 (PVAS…VYLL), 54 to 72 (CELF…ILLL), 126 to 146 (IFWL…FSAL), and 152 to 172 (KWLA…YGYI).

Belongs to the TVP23 family.

The protein resides in the membrane. In Bos taurus (Bovine), this protein is Golgi apparatus membrane protein TVP23 homolog B (TVP23B).